The primary structure comprises 331 residues: DNA-directed RNA polymerase subunit alpha (331 aa).

The alpha N-terminal domain (alpha-NTD) stretch occupies residues 1–225; sequence MLDIAMPKLE…QYSSIIADFN (225 aa). Residues 243 to 331 are alpha C-terminal domain (alpha-CTD); that stretch reads PSEIYDMPIE…AARLNDGSAE (89 aa).

The protein belongs to the RNA polymerase alpha chain family. As to quaternary structure, homodimer. The RNAP catalytic core consists of 2 alpha, 1 beta, 1 beta' and 1 omega subunit. When a sigma factor is associated with the core the holoenzyme is formed, which can initiate transcription.

The enzyme catalyses RNA(n) + a ribonucleoside 5'-triphosphate = RNA(n+1) + diphosphate. Its function is as follows. DNA-dependent RNA polymerase catalyzes the transcription of DNA into RNA using the four ribonucleoside triphosphates as substrates. The chain is DNA-directed RNA polymerase subunit alpha from Herpetosiphon aurantiacus (strain ATCC 23779 / DSM 785 / 114-95).